A 147-amino-acid polypeptide reads, in one-letter code: Hemoglobin subunit gamma (147 aa).

One can recognise a Globin domain in the interval 3–147 (HFTAEEKAAI…VANALAYKYH (145 aa)). The heme b site is built by His-64 and His-93.

Belongs to the globin family. As to quaternary structure, heterotetramer of two alpha chains and two gamma chains in fetal hemoglobin (Hb F). In terms of tissue distribution, red blood cells.

Functionally, gamma chains make up the fetal hemoglobin F, in combination with alpha chains. This chain is Hemoglobin subunit gamma (HBG), found in Loxodonta africana (African elephant).